Consider the following 103-residue polypeptide: MGNIFSPTHLIIILLLILLLFGRGRVAELMGDVAKGIKAFKKNMKEEEESIEDKVEMADTSQVINEESQQSQPLSVKRAAIRRKASSDSKGGKASIAKKQRVK.

Residues 1 to 21 (MGNIFSPTHLIIILLLILLLF) traverse the membrane as a helical segment. The disordered stretch occupies residues 48–103 (EESIEDKVEMADTSQVINEESQQSQPLSVKRAAIRRKASSDSKGGKASIAKKQRVK). A compositionally biased stretch (polar residues) spans 59–74 (DTSQVINEESQQSQPL).

Belongs to the TatA/E family. In terms of assembly, the Tat system comprises two distinct complexes: a TatABC complex, containing multiple copies of TatA, TatB and TatC subunits, and a separate TatA complex, containing only TatA subunits. Substrates initially bind to the TatABC complex, which probably triggers association of the separate TatA complex to form the active translocon.

The protein resides in the cell inner membrane. Its function is as follows. Part of the twin-arginine translocation (Tat) system that transports large folded proteins containing a characteristic twin-arginine motif in their signal peptide across membranes. TatA could form the protein-conducting channel of the Tat system. This Bartonella tribocorum (strain CIP 105476 / IBS 506) protein is Sec-independent protein translocase protein TatA.